We begin with the raw amino-acid sequence, 128 residues long: Small ribosomal subunit protein uS13 (128 aa).

Positions 98-128 are disordered; that stretch reads VRGQRTRTNARTRKGPRPRIGVKKKGKQAGS. Residues 101–128 show a composition bias toward basic residues; it reads QRTRTNARTRKGPRPRIGVKKKGKQAGS.

The protein belongs to the universal ribosomal protein uS13 family. As to quaternary structure, part of the 30S ribosomal subunit. Forms a loose heterodimer with protein S19. Forms two bridges to the 50S subunit in the 70S ribosome.

Functionally, located at the top of the head of the 30S subunit, it contacts several helices of the 16S rRNA. In the 70S ribosome it contacts the 23S rRNA (bridge B1a) and protein L5 of the 50S subunit (bridge B1b), connecting the 2 subunits; these bridges are implicated in subunit movement. Contacts the tRNAs in the A and P-sites. The chain is Small ribosomal subunit protein uS13 from Thermomicrobium roseum (strain ATCC 27502 / DSM 5159 / P-2).